We begin with the raw amino-acid sequence, 295 residues long: Inositol monophosphatase 1 (295 aa).

The Mg(2+) site is built by Glu73, Asp92, Ile94, Asp95, and Asp231. Residue Glu73 coordinates substrate. Substrate contacts are provided by residues 94–97 and Asp231; that span reads IDGT.

The protein belongs to the inositol monophosphatase superfamily. It depends on Mg(2+) as a cofactor.

It is found in the cytoplasm. The protein resides in the nucleus. It catalyses the reaction a myo-inositol phosphate + H2O = myo-inositol + phosphate. The protein operates within polyol metabolism; myo-inositol biosynthesis; myo-inositol from D-glucose 6-phosphate: step 2/2. Its activity is regulated as follows. Inhibited by Li(+) and Na(+). Its function is as follows. Responsible for the provision of inositol required for synthesis of phosphatidylinositol and polyphosphoinositides. This chain is Inositol monophosphatase 1 (INM1), found in Saccharomyces cerevisiae (strain ATCC 204508 / S288c) (Baker's yeast).